A 96-amino-acid chain; its full sequence is MPNHSSAKKMVRVIKERTFSNRVRKSRVRNSVKKFLAVLESKGHLEDAVTAFRAAESNIHKCVNKGVMHRNTAARKVKSLAAKLKAFDLSLQGTST.

It belongs to the bacterial ribosomal protein bS20 family.

Functionally, binds directly to 16S ribosomal RNA. This is Small ribosomal subunit protein bS20 from Anaplasma marginale (strain St. Maries).